A 1332-amino-acid chain; its full sequence is Xanthine dehydrogenase/oxidase (1332 aa).

One can recognise a 2Fe-2S ferredoxin-type domain in the interval 4 to 91; that stretch reads DELVFFVNGK…HVAVTTVEGI (88 aa). Residues Cys-43, Cys-48, Cys-51, Cys-73, Cys-113, Cys-116, Cys-148, and Cys-150 each coordinate [2Fe-2S] cluster. Residues 229–414 enclose the FAD-binding PCMH-type domain; the sequence is FEGERVTWIQ…LSIEIPYSRE (186 aa). FAD-binding positions include 257-264, Phe-337, 347-351, Asp-360, Leu-404, and Lys-422; these read LVVGNTEI and SLGGN. A disulfide bond links Cys-535 and Cys-992. Mo-molybdopterin-binding residues include Gln-767 and Phe-798. Residues Glu-802 and Arg-880 each contribute to the substrate site. A Mo-molybdopterin-binding site is contributed by Arg-912. Substrate contacts are provided by Phe-914 and Thr-1010. Position 1079 (Ala-1079) interacts with Mo-molybdopterin. Glu-1261 serves as the catalytic Proton acceptor.

Belongs to the xanthine dehydrogenase family. As to quaternary structure, homodimer. Interacts with BTN1A1. [2Fe-2S] cluster is required as a cofactor. It depends on FAD as a cofactor. Requires Mo-molybdopterin as cofactor. In terms of processing, subject to partial proteolysis; this alters the enzyme from the dehydrogenase form (D) to the oxidase form (O). Post-translationally, contains sulfhydryl groups that are easily oxidized (in vitro); this alters the enzyme from the dehydrogenase form (D) to the oxidase form (O). As to expression, detected in milk (at protein level).

Its subcellular location is the cytoplasm. It localises to the peroxisome. The protein resides in the secreted. It carries out the reaction xanthine + NAD(+) + H2O = urate + NADH + H(+). The catalysed reaction is hypoxanthine + NAD(+) + H2O = xanthine + NADH + H(+). The enzyme catalyses xanthine + O2 + H2O = urate + H2O2. Its activity is regulated as follows. Can be converted from the dehydrogenase form (D) to the oxidase form (O) irreversibly by proteolysis or reversibly through the oxidation of sulfhydryl groups. Its function is as follows. Key enzyme in purine degradation. Catalyzes the oxidation of hypoxanthine to xanthine. Catalyzes the oxidation of xanthine to uric acid. Contributes to the generation of reactive oxygen species. The sequence is that of Xanthine dehydrogenase/oxidase (XDH) from Bos taurus (Bovine).